Here is a 203-residue protein sequence, read N- to C-terminus: Small ribosomal subunit protein uS4 (203 aa).

The S4 RNA-binding domain occupies arginine 93 to valine 156.

It belongs to the universal ribosomal protein uS4 family. As to quaternary structure, part of the 30S ribosomal subunit. Contacts protein S5. The interaction surface between S4 and S5 is involved in control of translational fidelity.

One of the primary rRNA binding proteins, it binds directly to 16S rRNA where it nucleates assembly of the body of the 30S subunit. Its function is as follows. With S5 and S12 plays an important role in translational accuracy. The protein is Small ribosomal subunit protein uS4 of Streptococcus gordonii (strain Challis / ATCC 35105 / BCRC 15272 / CH1 / DL1 / V288).